We begin with the raw amino-acid sequence, 516 residues long: Cytochrome P450 1A1 (516 aa).

The interval 33 to 44 is mitochondrial targeting signal; that stretch reads WQPRVPKGLKSP. O-linked (GlcNAc) serine glycosylation occurs at serine 71. Position 228 (phenylalanine 228) interacts with substrate. Residue cysteine 461 participates in heme binding.

Belongs to the cytochrome P450 family. In terms of assembly, interacts with cytosolic chaperones HSP70 and HSP90; this interaction is required for initial targeting to mitochondria. Interacts (via mitochondrial targeting signal) with TOMM40 (via N-terminus); this interaction is required for translocation across the mitochondrial outer membrane. The cofactor is heme.

It is found in the endoplasmic reticulum membrane. The protein resides in the mitochondrion inner membrane. The protein localises to the microsome membrane. It localises to the cytoplasm. It carries out the reaction an organic molecule + reduced [NADPH--hemoprotein reductase] + O2 = an alcohol + oxidized [NADPH--hemoprotein reductase] + H2O + H(+). The enzyme catalyses estrone + reduced [NADPH--hemoprotein reductase] + O2 = 2-hydroxyestrone + oxidized [NADPH--hemoprotein reductase] + H2O + H(+). The catalysed reaction is estrone + reduced [NADPH--hemoprotein reductase] + O2 = 4-hydroxyestrone + oxidized [NADPH--hemoprotein reductase] + H2O + H(+). It catalyses the reaction estrone + reduced [NADPH--hemoprotein reductase] + O2 = 6alpha-hydroxyestrone + oxidized [NADPH--hemoprotein reductase] + H2O + H(+). It carries out the reaction estrone + reduced [NADPH--hemoprotein reductase] + O2 = 15alpha-hydroxyestrone + oxidized [NADPH--hemoprotein reductase] + H2O + H(+). The enzyme catalyses estrone + reduced [NADPH--hemoprotein reductase] + O2 = 16alpha-hydroxyestrone + oxidized [NADPH--hemoprotein reductase] + H2O + H(+). The catalysed reaction is 17beta-estradiol + reduced [NADPH--hemoprotein reductase] + O2 = 2-hydroxy-17beta-estradiol + oxidized [NADPH--hemoprotein reductase] + H2O + H(+). It catalyses the reaction 17beta-estradiol + reduced [NADPH--hemoprotein reductase] + O2 = 4-hydroxy-17beta-estradiol + oxidized [NADPH--hemoprotein reductase] + H2O + H(+). It carries out the reaction 17beta-estradiol + reduced [NADPH--hemoprotein reductase] + O2 = 6alpha-hydroxy-17beta-estradiol + oxidized [NADPH--hemoprotein reductase] + H2O + H(+). The enzyme catalyses 17beta-estradiol + reduced [NADPH--hemoprotein reductase] + O2 = 7alpha-hydroxy-17beta-estradiol + oxidized [NADPH--hemoprotein reductase] + H2O + H(+). The catalysed reaction is 17beta-estradiol + reduced [NADPH--hemoprotein reductase] + O2 = 15alpha-hydroxy-17beta-estradiol + oxidized [NADPH--hemoprotein reductase] + H2O + H(+). It catalyses the reaction (5Z,8Z,11Z)-eicosatrienoate + reduced [NADPH--hemoprotein reductase] + O2 = 19-hydroxy-(5Z,8Z,11Z)-eicosatrienoate + oxidized [NADPH--hemoprotein reductase] + H2O + H(+). It carries out the reaction (5Z,8Z,11Z,14Z)-eicosatetraenoate + reduced [NADPH--hemoprotein reductase] + O2 = 16-hydroxy-(5Z,8Z,11Z,14Z)-eicosatetraenoate + oxidized [NADPH--hemoprotein reductase] + H2O + H(+). The enzyme catalyses (5Z,8Z,11Z,14Z)-eicosatetraenoate + reduced [NADPH--hemoprotein reductase] + O2 = 17-hydroxy-(5Z,8Z,11Z,14Z)-eicosatetraenoate + oxidized [NADPH--hemoprotein reductase] + H2O + H(+). The catalysed reaction is (5Z,8Z,11Z,14Z)-eicosatetraenoate + reduced [NADPH--hemoprotein reductase] + O2 = 18-hydroxy-(5Z,8Z,11Z,14Z)-eicosatetraenoate + oxidized [NADPH--hemoprotein reductase] + H2O + H(+). It catalyses the reaction (5Z,8Z,11Z,14Z)-eicosatetraenoate + reduced [NADPH--hemoprotein reductase] + O2 = 19-hydroxy-(5Z,8Z,11Z,14Z)-eicosatetraenoate + oxidized [NADPH--hemoprotein reductase] + H2O + H(+). It carries out the reaction (5Z,8Z,11Z,14Z,17Z)-eicosapentaenoate + reduced [NADPH--hemoprotein reductase] + O2 = 19-hydroxy-(5Z,8Z,11Z,14Z,17Z)-eicosapentaenoate + oxidized [NADPH--hemoprotein reductase] + H2O + H(+). The enzyme catalyses (5Z,8Z,11Z,14Z)-eicosatetraenoate + reduced [NADPH--hemoprotein reductase] + O2 = (8R,9S)-epoxy-(5Z,11Z,14Z)-eicosatrienoate + oxidized [NADPH--hemoprotein reductase] + H2O + H(+). The catalysed reaction is (5Z,8Z,11Z,14Z)-eicosatetraenoate + reduced [NADPH--hemoprotein reductase] + O2 = (11R,12S)-epoxy-(5Z,8Z,14Z)-eicosatrienoate + oxidized [NADPH--hemoprotein reductase] + H2O + H(+). It catalyses the reaction (5Z,8Z,11Z,14Z)-eicosatetraenoate + reduced [NADPH--hemoprotein reductase] + O2 = (14S,15R)-epoxy-(5Z,8Z,11Z)-eicosatrienoate + oxidized [NADPH--hemoprotein reductase] + H2O + H(+). It carries out the reaction (5Z,8Z,11Z,14Z)-eicosatetraenoate + reduced [NADPH--hemoprotein reductase] + O2 = (14R,15S)-epoxy-(5Z,8Z,11Z)-eicosatrienoate + oxidized [NADPH--hemoprotein reductase] + H2O + H(+). The enzyme catalyses (5Z,8Z,11Z,14Z,17Z)-eicosapentaenoate + reduced [NADPH--hemoprotein reductase] + O2 = (17R,18S)-epoxy-(5Z,8Z,11Z,14Z)-eicosatetraenoate + oxidized [NADPH--hemoprotein reductase] + H2O + H(+). The catalysed reaction is (4Z,7Z,10Z,13Z,16Z,19Z)-docosahexaenoate + reduced [NADPH--hemoprotein reductase] + O2 = (19S,20R)-epoxy-(4Z,7Z,10Z,13Z,16Z)-docosapentaenoate + oxidized [NADPH--hemoprotein reductase] + H2O + H(+). It catalyses the reaction (4Z,7Z,10Z,13Z,16Z,19Z)-docosahexaenoate + reduced [NADPH--hemoprotein reductase] + O2 = (19R,20S)-epoxy-(4Z,7Z,10Z,13Z,16Z)-docosapentaenoate + oxidized [NADPH--hemoprotein reductase] + H2O + H(+). It carries out the reaction all-trans-retinol + reduced [NADPH--hemoprotein reductase] + O2 = all-trans-retinal + oxidized [NADPH--hemoprotein reductase] + 2 H2O + H(+). The enzyme catalyses all-trans-retinal + reduced [NADPH--hemoprotein reductase] + O2 = all-trans-retinoate + oxidized [NADPH--hemoprotein reductase] + H2O + 2 H(+). The catalysed reaction is (13S)-hydroperoxy-(9Z,11E)-octadecadienoate = 13-oxo-(9Z,11E)-octadecadienoate + H2O. It catalyses the reaction (12S)-hydroperoxy-(5Z,8Z,10E,14Z)-eicosatetraenoate = 12-oxo-(5Z,8Z,10E,14Z)-eicosatetraenoate + H2O. It carries out the reaction (15S)-hydroperoxy-(5Z,8Z,11Z,13E)-eicosatetraenoate = 15-oxo-(5Z,8Z,11Z,13E)-eicosatetraenoate + H2O. The enzyme catalyses (5S)-hydroperoxy-(6E,8Z,11Z,14Z)-eicosatetraenoate = 5-oxo-(6E,8Z,11Z,14Z)-eicosatetraenoate + H2O. It functions in the pathway steroid hormone biosynthesis. It participates in lipid metabolism; fatty acid metabolism. Its pathway is cofactor metabolism; retinol metabolism. Functionally, a cytochrome P450 monooxygenase involved in the metabolism of various endogenous substrates, including fatty acids, steroid hormones and vitamins. Mechanistically, uses molecular oxygen inserting one oxygen atom into a substrate, and reducing the second into a water molecule, with two electrons provided by NADPH via cytochrome P450 reductase (CPR; NADPH-ferrihemoprotein reductase). Catalyzes the hydroxylation of carbon-hydrogen bonds. Exhibits high catalytic activity for the formation of hydroxyestrogens from estrone (E1) and 17beta-estradiol (E2), namely 2-hydroxy E1 and E2, as well as D-ring hydroxylated E1 and E2 at the C15alpha and C16alpha positions. Displays different regioselectivities for polyunsaturated fatty acids (PUFA) hydroxylation. Catalyzes the epoxidation of double bonds of certain PUFA. Converts arachidonic acid toward epoxyeicosatrienoic acid (EET) regioisomers, 8,9-, 11,12-, and 14,15-EET, that function as lipid mediators in the vascular system. Displays an absolute stereoselectivity in the epoxidation of eicosapentaenoic acid (EPA) producing the 17(R),18(S) enantiomer. May play an important role in all-trans retinoic acid biosynthesis in extrahepatic tissues. Catalyzes two successive oxidative transformation of all-trans retinol to all-trans retinal and then to the active form all-trans retinoic acid. May also participate in eicosanoids metabolism by converting hydroperoxide species into oxo metabolites (lipoxygenase-like reaction, NADPH-independent). The sequence is that of Cytochrome P450 1A1 (CYP1A1) from Balaenoptera acutorostrata (Common minke whale).